The primary structure comprises 88 residues: Probable Fe(2+)-trafficking protein (88 aa).

This sequence belongs to the Fe(2+)-trafficking protein family.

Its function is as follows. Could be a mediator in iron transactions between iron acquisition and iron-requiring processes, such as synthesis and/or repair of Fe-S clusters in biosynthetic enzymes. The polypeptide is Probable Fe(2+)-trafficking protein (Alkalilimnicola ehrlichii (strain ATCC BAA-1101 / DSM 17681 / MLHE-1)).